A 555-amino-acid polypeptide reads, in one-letter code: Potassium-transporting ATPase potassium-binding subunit (555 aa).

Helical transmembrane passes span 2-22 (IWVA…PTGI), 60-80 (QYAL…YFIF), 130-150 (IGIT…VMAF), 173-193 (VFLP…VPQT), 246-266 (MSNI…PFTY), 278-298 (ILFV…TTSE), 374-394 (AGFV…GLMV), 412-432 (LIAV…ALAL), 483-503 (LVMF…AASL), and 525-545 (GIFI…MLVL).

This sequence belongs to the KdpA family. In terms of assembly, the system is composed of three essential subunits: KdpA, KdpB and KdpC.

The protein resides in the cell membrane. Part of the high-affinity ATP-driven potassium transport (or Kdp) system, which catalyzes the hydrolysis of ATP coupled with the electrogenic transport of potassium into the cytoplasm. This subunit binds the extracellular potassium ions and delivers the ions to the membrane domain of KdpB through an intramembrane tunnel. The protein is Potassium-transporting ATPase potassium-binding subunit of Bacillus cereus (strain 03BB102).